The primary structure comprises 307 residues: Ribonuclease Z (307 aa).

Zn(2+)-binding residues include His-63, His-65, Asp-67, His-68, His-141, Asp-212, and His-270. Asp-67 functions as the Proton acceptor in the catalytic mechanism.

This sequence belongs to the RNase Z family. In terms of assembly, homodimer. Requires Zn(2+) as cofactor.

The enzyme catalyses Endonucleolytic cleavage of RNA, removing extra 3' nucleotides from tRNA precursor, generating 3' termini of tRNAs. A 3'-hydroxy group is left at the tRNA terminus and a 5'-phosphoryl group is left at the trailer molecule.. In terms of biological role, zinc phosphodiesterase, which displays some tRNA 3'-processing endonuclease activity. Probably involved in tRNA maturation, by removing a 3'-trailer from precursor tRNA. This chain is Ribonuclease Z, found in Bacillus cereus (strain ZK / E33L).